A 355-amino-acid chain; its full sequence is Uroporphyrinogen decarboxylase (355 aa).

Residues 27 to 31 (RQAGR), Asp-77, Tyr-154, Thr-209, and His-327 contribute to the substrate site.

It belongs to the uroporphyrinogen decarboxylase family. As to quaternary structure, homodimer.

It localises to the cytoplasm. The catalysed reaction is uroporphyrinogen III + 4 H(+) = coproporphyrinogen III + 4 CO2. It functions in the pathway porphyrin-containing compound metabolism; protoporphyrin-IX biosynthesis; coproporphyrinogen-III from 5-aminolevulinate: step 4/4. Its function is as follows. Catalyzes the decarboxylation of four acetate groups of uroporphyrinogen-III to yield coproporphyrinogen-III. The chain is Uroporphyrinogen decarboxylase from Erwinia tasmaniensis (strain DSM 17950 / CFBP 7177 / CIP 109463 / NCPPB 4357 / Et1/99).